We begin with the raw amino-acid sequence, 449 residues long: Protein CapK (449 aa).

The protein operates within capsule biogenesis; capsule polysaccharide biosynthesis. Required for the biosynthesis of type 1 capsular polysaccharide. This is Protein CapK (capK) from Staphylococcus aureus.